The chain runs to 860 residues: Leucine--tRNA ligase (860 aa).

The 'HIGH' region motif lies at 42-52 (PYPSGRLHMGH). Residues 619 to 623 (KMSKS) carry the 'KMSKS' region motif. ATP is bound at residue K622.

The protein belongs to the class-I aminoacyl-tRNA synthetase family.

Its subcellular location is the cytoplasm. The enzyme catalyses tRNA(Leu) + L-leucine + ATP = L-leucyl-tRNA(Leu) + AMP + diphosphate. In Photorhabdus laumondii subsp. laumondii (strain DSM 15139 / CIP 105565 / TT01) (Photorhabdus luminescens subsp. laumondii), this protein is Leucine--tRNA ligase.